Here is a 650-residue protein sequence, read N- to C-terminus: Aminopeptidase B (650 aa).

Ala-2 carries the post-translational modification N-acetylalanine. Ser-7 is subject to Phosphoserine. A substrate-binding site is contributed by 298–302; that stretch reads GGMEN. His-325 provides a ligand contact to Zn(2+). Glu-326 acts as the Proton acceptor in catalysis. Zn(2+) contacts are provided by His-329 and Glu-348. Lys-446 carries the post-translational modification N6-acetyllysine.

The protein belongs to the peptidase M1 family. It depends on Zn(2+) as a cofactor.

It is found in the secreted. The catalysed reaction is Release of N-terminal Arg and Lys from oligopeptides when P1' is not Pro. Also acts on arylamides of Arg and Lys.. Functionally, exopeptidase which selectively removes arginine and/or lysine residues from the N-terminus of several peptide substrates including Arg(0)-Leu-enkephalin, Arg(0)-Met-enkephalin and Arg(-1)-Lys(0)-somatostatin-14. Can hydrolyze leukotriene A4 (LTA-4) into leukotriene B4 (LTB-4). This Homo sapiens (Human) protein is Aminopeptidase B (RNPEP).